Reading from the N-terminus, the 243-residue chain is 1-(5-phosphoribosyl)-5-[(5-phosphoribosylamino)methylideneamino] imidazole-4-carboxamide isomerase (243 aa).

Residue D8 is the Proton acceptor of the active site. Residue D129 is the Proton donor of the active site.

The protein belongs to the HisA/HisF family.

It localises to the cytoplasm. The enzyme catalyses 1-(5-phospho-beta-D-ribosyl)-5-[(5-phospho-beta-D-ribosylamino)methylideneamino]imidazole-4-carboxamide = 5-[(5-phospho-1-deoxy-D-ribulos-1-ylimino)methylamino]-1-(5-phospho-beta-D-ribosyl)imidazole-4-carboxamide. It participates in amino-acid biosynthesis; L-histidine biosynthesis; L-histidine from 5-phospho-alpha-D-ribose 1-diphosphate: step 4/9. The sequence is that of 1-(5-phosphoribosyl)-5-[(5-phosphoribosylamino)methylideneamino] imidazole-4-carboxamide isomerase from Brucella anthropi (strain ATCC 49188 / DSM 6882 / CCUG 24695 / JCM 21032 / LMG 3331 / NBRC 15819 / NCTC 12168 / Alc 37) (Ochrobactrum anthropi).